A 158-amino-acid chain; its full sequence is S-ribosylhomocysteine lyase (158 aa).

Fe cation-binding residues include histidine 54, histidine 58, and cysteine 124.

Belongs to the LuxS family. In terms of assembly, homodimer. Fe cation serves as cofactor.

The enzyme catalyses S-(5-deoxy-D-ribos-5-yl)-L-homocysteine = (S)-4,5-dihydroxypentane-2,3-dione + L-homocysteine. Functionally, involved in the synthesis of autoinducer 2 (AI-2) which is secreted by bacteria and is used to communicate both the cell density and the metabolic potential of the environment. The regulation of gene expression in response to changes in cell density is called quorum sensing. Catalyzes the transformation of S-ribosylhomocysteine (RHC) to homocysteine (HC) and 4,5-dihydroxy-2,3-pentadione (DPD). The chain is S-ribosylhomocysteine lyase from Lactiplantibacillus plantarum (strain ATCC BAA-793 / NCIMB 8826 / WCFS1) (Lactobacillus plantarum).